Reading from the N-terminus, the 246-residue chain is Indole-3-glycerol phosphate synthase (246 aa).

Belongs to the TrpC family.

It carries out the reaction 1-(2-carboxyphenylamino)-1-deoxy-D-ribulose 5-phosphate + H(+) = (1S,2R)-1-C-(indol-3-yl)glycerol 3-phosphate + CO2 + H2O. It functions in the pathway amino-acid biosynthesis; L-tryptophan biosynthesis; L-tryptophan from chorismate: step 4/5. This chain is Indole-3-glycerol phosphate synthase, found in Sulfurisphaera tokodaii (strain DSM 16993 / JCM 10545 / NBRC 100140 / 7) (Sulfolobus tokodaii).